Consider the following 491-residue polypeptide: Phosphoethanolamine N-methyltransferase 1 (491 aa).

Ala-2 bears the N-acetylalanine mark. Residues Gly-61, Arg-66, Asp-82, Asp-107, Val-108, and Asn-126 each coordinate S-adenosyl-L-homocysteine. Residues Ser-159, Ser-164, Gly-165, Arg-169, and Tyr-176 each contribute to the phosphocholine site. N-methylethanolamine phosphate contacts are provided by residues 245–246 (QY) and Tyr-254. Tyr-254 lines the phosphocholine pocket. Residues Val-263, Ser-264, Gly-290, Asp-312, Asp-338, Cys-339, and Arg-355 each contribute to the S-adenosyl-L-homocysteine site. 5 residues coordinate phosphocholine: Tyr-386, Tyr-400, Arg-404, Tyr-406, and Lys-472. N-methylethanolamine phosphate contacts are provided by residues Tyr-386, Tyr-400, 404-406 (RGY), and Lys-472.

It belongs to the class I-like SAM-binding methyltransferase superfamily. PEAMT family. As to expression, highly expressed in the meristem and elongation zones of the root. Expressed in differentiated root epidermal cells. Highly expressed in leaf vasculature.

It localises to the cytoplasm. The catalysed reaction is phosphoethanolamine + S-adenosyl-L-methionine = N-methylethanolamine phosphate + S-adenosyl-L-homocysteine + H(+). It catalyses the reaction N-methylethanolamine phosphate + S-adenosyl-L-methionine = N,N-dimethylethanolamine phosphate + S-adenosyl-L-homocysteine + H(+). It carries out the reaction N,N-dimethylethanolamine phosphate + S-adenosyl-L-methionine = phosphocholine + S-adenosyl-L-homocysteine + H(+). Its pathway is phospholipid metabolism; phosphatidylcholine biosynthesis; phosphocholine from phosphoethanolamine: step 1/1. Functionally, involved in phosphocholine biosynthesis. Catalyzes the N-methylation of phosphoethanolamine, phosphomonomethylethanolamine and phosphodimethylethanolamine, the three methylation steps required to convert phosphoethanolamine to phosphocholine (PC). Required for root system development and epidermal cell integrity through its role in choline and phospholipid metabolism. In association with NMT3, regulates PC homeostasis, phase transition at the shoot apex, coordinated organ development, and fertility. In association with NMT3, involved in phosphatidylcholine biosynthesis and vascular development. In association with NMT2, involved in the production of phosphatidylcholine in roots, essential for root development. In association with NMT2 produce phosphocholine mainly for leaf growth maintenance. Contributes to the regulation of overall root zonation dynamics through reactive oxygen species (ROS) and auxin-regulated cell differentiation. Participates in root development of primary root elongation under salt stress conditions by balancing reactive oxygen species (ROS) production and distribution through abscisic acid (ABA) signaling. This chain is Phosphoethanolamine N-methyltransferase 1, found in Arabidopsis thaliana (Mouse-ear cress).